The sequence spans 456 residues: Elongator complex protein 4 (456 aa).

Residues 1 to 11 show a composition bias toward basic and acidic residues; it reads MSFRKRGEILN. Positions 1–91 are disordered; that stretch reads MSFRKRGEIL…SQPTTSTGSA (91 aa). At R13 the chain carries Omega-N-methylarginine. Positions 18 to 27 are enriched in low complexity; that stretch reads RGPLLRGPPR. A compositionally biased stretch (basic and acidic residues) spans 57–66; that stretch reads NIADESKTKM. Low complexity predominate over residues 77 to 90; the sequence is PSPATSQPTTSTGS. S222 is modified (phosphoserine). The disordered stretch occupies residues 424–444; it reads EGSAASEQSHSHSHSDEISHN. Residues 432-442 are compositionally biased toward basic and acidic residues; it reads SHSHSHSDEIS.

This sequence belongs to the ELP4 family. In terms of assembly, component of the elongator complex which consists of ELP1/IKI3, ELP2, ELP3, ELP4, ELP5/IKI1 and ELP6. The elongator complex is composed of two copies of the Elp123 subcomplex (composed of ELP1/IKI3, ELP2 and ELP3) and two copies of the Elp456 subcomplex (composed of ELP4, ELP5/IKI1 and ELP6). The Elp123 subcomplex forms a two-lobed scaffold, which binds the Elp456 subcomplex asymmetrically. In each lobe, ELP2 is tightly sandwiched between ELP1/IKI3 and ELP3. The Elp123 subcomplex binds tRNA through ELP1/IKI3 and ELP3 and can bind 2 tRNAs simultaneously. tRNA-binding by the Elp123 subcomplex induces conformational rearrangements which precisely position the targeted anticodon base in the active site. The Elp456 subcomplex binds tRNA and has ATPase activity. ELP4 interacts with KTI12.

The protein resides in the cytoplasm. The protein localises to the nucleus. It participates in tRNA modification; 5-methoxycarbonylmethyl-2-thiouridine-tRNA biosynthesis. Its function is as follows. Component of the elongator complex, a multiprotein complex which is required for multiple tRNA modifications, including mcm5U (5-methoxycarbonylmethyl uridine), mcm5s2U (5-methoxycarbonylmethyl-2-thiouridine), and ncm5U (5-carbamoylmethyl uridine). The elongator complex catalyzes formation of carboxymethyluridine in the wobble base at position 34 in tRNAs. It functions as a gamma-toxin target (TOT); disruption of the complex confers resistance to Kluyveromyces lactis toxin zymocin (pGKL1 killer toxin). May also be involved in sensitivity to Pichia inositovora toxin. The chain is Elongator complex protein 4 from Saccharomyces cerevisiae (strain ATCC 204508 / S288c) (Baker's yeast).